The following is a 258-amino-acid chain: Tryptophan synthase alpha chain (258 aa).

Active-site proton acceptor residues include E52 and D63.

Belongs to the TrpA family. Tetramer of two alpha and two beta chains.

The enzyme catalyses (1S,2R)-1-C-(indol-3-yl)glycerol 3-phosphate + L-serine = D-glyceraldehyde 3-phosphate + L-tryptophan + H2O. It participates in amino-acid biosynthesis; L-tryptophan biosynthesis; L-tryptophan from chorismate: step 5/5. Its function is as follows. The alpha subunit is responsible for the aldol cleavage of indoleglycerol phosphate to indole and glyceraldehyde 3-phosphate. The sequence is that of Tryptophan synthase alpha chain from Streptococcus pneumoniae (strain ATCC 700669 / Spain 23F-1).